Consider the following 1188-residue polypeptide: Integrin alpha-11 (1188 aa).

A signal peptide spans 1–22 (MDFPRGLLVAWTLSLWPGFTDT). Residues 23–1141 (FNMDTRNPRV…ISKQEDWQVP (1119 aa)) lie on the Extracellular side of the membrane. 2 FG-GAP repeats span residues 24 to 85 (NMDT…NCTK) and 91 to 151 (VTLS…FSKT). Residues Cys76 and Cys83 are joined by a disulfide bond. N-linked (GlcNAc...) asparagine glycosylation is found at Asn82 and Asn95. Disulfide bonds link Cys121–Cys139 and Cys129–Cys159. Positions 164–345 (DIVIVLDGSN…AALKDIVDAL (182 aa)) constitute a VWFA domain. N-linked (GlcNAc...) asparagine glycans are attached at residues Asn291, Asn331, Asn358, Asn449, and Asn462. 5 FG-GAP repeats span residues 355-406 (TNKN…VIPH), 411-461 (LKEF…SMHN), 462-527 (NRSL…RFVY), 528-586 (NGTL…NILK), and 590-650 (QRIT…FEPS). Ca(2+) is bound by residues Asp488, Asn490, Asp492, and Asp496. Asn528 is a glycosylation site (N-linked (GlcNAc...) asparagine). Positions 551, 553, 555, 559, 613, 615, 617, and 621 each coordinate Ca(2+). Asn642 carries N-linked (GlcNAc...) asparagine glycosylation. 3 disulfides stabilise this stretch: Cys659-Cys668, Cys674-Cys729, and Cys781-Cys787. N-linked (GlcNAc...) asparagine glycosylation is present at Asn694. N-linked (GlcNAc...) asparagine glycosylation is present at Asn857. An intrachain disulfide couples Cys881 to Cys893. N-linked (GlcNAc...) asparagine glycosylation is found at Asn894, Asn973, Asn1031, Asn1039, and Asn1059. A helical membrane pass occupies residues 1142–1164 (IWIIVGSTLGGLLLLALLVLALW). Residues 1165 to 1188 (KLGFFKSAKRKREPGLGPIPKELK) are Cytoplasmic-facing.

The protein belongs to the integrin alpha chain family. As to quaternary structure, heterodimer of an alpha and a beta subunit. Alpha-11 associates with beta-1. Interacts with RAB21.

It localises to the membrane. In terms of biological role, integrin alpha-11/beta-1 is a receptor for collagen. This is Integrin alpha-11 (Itga11) from Mus musculus (Mouse).